The chain runs to 236 residues: Biosynthetic peptidoglycan transglycosylase (236 aa).

The helical transmembrane segment at 12 to 31 (ALLWFAASSIVLVLVFRWVP) threads the bilayer.

It belongs to the glycosyltransferase 51 family.

Its subcellular location is the cell inner membrane. It catalyses the reaction [GlcNAc-(1-&gt;4)-Mur2Ac(oyl-L-Ala-gamma-D-Glu-L-Lys-D-Ala-D-Ala)](n)-di-trans,octa-cis-undecaprenyl diphosphate + beta-D-GlcNAc-(1-&gt;4)-Mur2Ac(oyl-L-Ala-gamma-D-Glu-L-Lys-D-Ala-D-Ala)-di-trans,octa-cis-undecaprenyl diphosphate = [GlcNAc-(1-&gt;4)-Mur2Ac(oyl-L-Ala-gamma-D-Glu-L-Lys-D-Ala-D-Ala)](n+1)-di-trans,octa-cis-undecaprenyl diphosphate + di-trans,octa-cis-undecaprenyl diphosphate + H(+). It functions in the pathway cell wall biogenesis; peptidoglycan biosynthesis. Its function is as follows. Peptidoglycan polymerase that catalyzes glycan chain elongation from lipid-linked precursors. In Pseudomonas putida (strain GB-1), this protein is Biosynthetic peptidoglycan transglycosylase.